We begin with the raw amino-acid sequence, 1330 residues long: ESX-3 secretion system protein EccC3 (1330 aa).

2 consecutive transmembrane segments (helical) span residues 43-63 and 65-85; these read LPYL…ATGM and VISP…TALY. FtsK domains lie at 456 to 662, 811 to 1000, and 1090 to 1280; these read GEPL…SVSR, RDPL…RDSN, and LAPV…ADSG. Residues 479 to 486, 829 to 836, and 1107 to 1114 each bind ATP; these read GMTGSGKS, GGPKSGKS, and GDARSGKT.

Part of the ESX-3 / type VII secretion system (T7SS), which is composed of cytosolic and membrane components. The ESX-3 membrane complex is composed of EccB3, EccC3, EccD3 and EccE3.

It localises to the cell inner membrane. Part of the ESX-3 specialized secretion system, which is important for iron and zinc uptake or homeostasis. The polypeptide is ESX-3 secretion system protein EccC3 (Mycobacterium tuberculosis (strain CDC 1551 / Oshkosh)).